A 76-amino-acid polypeptide reads, in one-letter code: ATP synthase subunit 9, mitochondrial (76 aa).

Helical transmembrane passes span 14–34 (IATI…AALI) and 52–72 (ILGF…SFLL).

Belongs to the ATPase C chain family. F-type ATPases have 2 components, CF(1) - the catalytic core - and CF(0) - the membrane proton channel. CF(1) has five subunits: alpha(3), beta(3), gamma(1), delta(1), epsilon(1). CF(0) has three main subunits: a, b and c.

The protein resides in the mitochondrion membrane. Functionally, mitochondrial membrane ATP synthase (F(1)F(0) ATP synthase or Complex V) produces ATP from ADP in the presence of a proton gradient across the membrane which is generated by electron transport complexes of the respiratory chain. F-type ATPases consist of two structural domains, F(1) - containing the extramembraneous catalytic core and F(0) - containing the membrane proton channel, linked together by a central stalk and a peripheral stalk. During catalysis, ATP synthesis in the catalytic domain of F(1) is coupled via a rotary mechanism of the central stalk subunits to proton translocation. Part of the complex F(0) domain. A homomeric c-ring of probably 10 subunits is part of the complex rotary element. The polypeptide is ATP synthase subunit 9, mitochondrial (ATP9) (Wickerhamomyces canadensis (Yeast)).